A 1372-amino-acid chain; its full sequence is Putative Polyprotein CP (1372 aa).

2 coiled-coil regions span residues 126 to 153 (NKEN…LKNI) and 299 to 350 (EKQK…EELD). The tract at residues 372-398 (SESSEINEISDNETEQISGSDSDYNNE) is disordered. The segment covering 386–398 (EQISGSDSDYNNE) has biased composition (polar residues). The segment at 739–756 (CKCYNCGEEGHISPNCKK) adopts a CCHC-type zinc-finger fold. A coiled-coil region spans residues 1162-1189 (DDRTNIQREKDQIEKADHNLELQKELNN).

It localises to the virion. The chain is Putative Polyprotein CP from Cassava vein mosaic virus (CsVMV).